Consider the following 208-residue polypeptide: Small ribosomal subunit protein uS4 (208 aa).

Positions Arg98–Gln161 constitute an S4 RNA-binding domain.

This sequence belongs to the universal ribosomal protein uS4 family. In terms of assembly, part of the 30S ribosomal subunit. Contacts protein S5. The interaction surface between S4 and S5 is involved in control of translational fidelity.

Its function is as follows. One of the primary rRNA binding proteins, it binds directly to 16S rRNA where it nucleates assembly of the body of the 30S subunit. In terms of biological role, with S5 and S12 plays an important role in translational accuracy. The sequence is that of Small ribosomal subunit protein uS4 from Nitratidesulfovibrio vulgaris (strain ATCC 29579 / DSM 644 / CCUG 34227 / NCIMB 8303 / VKM B-1760 / Hildenborough) (Desulfovibrio vulgaris).